The chain runs to 568 residues: Phosphoprotein (568 aa).

Disordered regions lie at residues 1–22 (MDQDAFILKEDSEVERKAPGGR) and 40–320 (PTDI…GIGE). Positions 7-20 (ILKEDSEVERKAPG) are enriched in basic and acidic residues. The interval 33–41 (DAVLSSEPT) is N0 binding. Residues 50–60 (LHNTINTSQGP) show a composition bias toward polar residues. Position 68 is a phosphoserine; by host (Ser-68). Positions 83–101 (RSGEESRVSGRTSKPEAEA) are enriched in basic and acidic residues. At Ser-125 the chain carries Phosphoserine; by host. Positions 150 to 168 (GIEDENREMAAHPDKRGED) are enriched in basic and acidic residues. A compositionally biased stretch (polar residues) spans 191 to 206 (ASNNGRSMEPGSSHSA). Residues Ser-192, Ser-249, and Ser-257 each carry the phosphoserine; by host modification. The interval 344 to 411 (FESSRDASYV…SFRDIYKRFS (68 aa)) is multimerization. Positions 364-429 (YAEMTFNVCG…LLMSNLSTLH (66 aa)) form a coiled coil. Residues 412–445 (EYQKEQNSLLMSNLSTLHIITDRGGKTDNTDSLT) form a l protein binding region. 2 positions are modified to phosphoserine; by host: Ser-447 and Ser-449. The tract at residues 479-568 (DLIREDEFRD…VEEDIESLTN (90 aa)) is interaction with the nucleocapsid (N-RNA).

This sequence belongs to the respirovirus P protein family. Homotetramer. Interacts (via multimerization domain) with polymerase L; this interaction forms the polymerase complex. Interacts (via N-terminus) with N0; this interaction allows P to chaperon N0 before encapsidation and form the N-P complex. Interacts (via C-terminus) with N-RNA template; this interaction positions the polymerase on the template. In terms of processing, phosphorylated by PKC/PRKCZ, and other unknown kinases. Phosphorylation is necessary for viral transcription and replication. The N-terminus contains the majority of phosphorylated sites. Ser-249 is the major site of phosphorylation, but is not necessary for most functions.

The protein localises to the host cytoplasm. Essential cofactor of the RNA polymerase L that plays a central role in the transcription and replication by forming the polymerase complex with RNA polymerase L and recruiting L to the genomic N-RNA template for RNA synthesis. Also plays a central role in the encapsidation of nascent RNA chains by forming the encapsidation complex with the nucleocapsid protein N (N-P complex). Acts as a chaperone for newly synthesized free N protein, so-called N0, allowing encapsidation of nascent RNA chains during replication. The nucleoprotein protein N prevents excessive phosphorylation of P, which leads to down-regulation of viral transcription/ replication. Participates, together with N, in the formation of viral factories (viroplasms), which are large inclusions in the host cytoplasm where replication takes place. Recruits host PI4KB and remodel the host endoplasmic reticulum membrane to form viral replication factories. The chain is Phosphoprotein (P/V/C) from Sendai virus (strain 6/94) (SeV).